Reading from the N-terminus, the 238-residue chain is Metal-independent phosphoserine phosphatase (238 aa).

The active-site Tele-phosphohistidine intermediate is His32. Glu107 acts as the Proton donor/acceptor in catalysis.

This sequence belongs to the phosphoglycerate mutase family.

It catalyses the reaction O-phospho-L-serine + H2O = L-serine + phosphate. The enzyme catalyses O-phospho-D-serine + H2O = D-serine + phosphate. Phosphoglycerate mutase-like protein lacking PGM activity, but having a low metal-independent phosphoserine phosphatase activity in vitro. May be involved in serine biosynthesis. The polypeptide is Metal-independent phosphoserine phosphatase (IPSP) (Arabidopsis thaliana (Mouse-ear cress)).